The primary structure comprises 941 residues: MVERRNPLVLSSTRSTLRSVLNSSQPSSADGDRVLNKDGDLLRGNARLSAGILRWRKDGENVSDAKLDSLDDSALVGLSTQLLKRLSINSGSLVVVKNIEIGIQRVAQVVVLDPPKTTLEDASLTQVPVSDSLHTMLVFPTYDLMGQQLLDQEVAYLSPMLAFNLSLHISCLKSLVHRGNGVLEKYFEAKCDEEFIGKSAEDGSKIGLDLEPVSQVPGYASHLRVSFVKIPECGTIPSLKVNSSFEAEERQGLIDSALQKYFGTDRQLSRGDIFRIYIDWNCGSSICNPCSQRLCSESDDYIYFKVIAMEPSNERFLRVNHSQTALVLGGTVSSGLPPDLLVYRSKVPMPLQEETVNILASVLSPPLCPSALASKLRVAVLLHGIPGCGKRTVVKYVARRLGLHVVEFSCHSLLASSERKTSTALAQTFNMARRYSPTILLLRHFDVFKNLGSQDGSLGDRVGVSFEIASVIRELTEPVSNGDSSMEEKSNSNFSENEVGKFRGHQVLLIASAESTEGISPTIRRCFSHEIRMGSLNDEQRSEMLSQSLQGVSQFLNISSDEFMKGLVGQTSGFLPRDLQALVADAGANLYISQESETKKINSLSDDLHGVDIHQASQIDNSTEKLTAKEDFTKALDRSKKRNASALGAPKVPNVKWDDVGGLEDVKTSILDTVQLPLLHKDLFSSGLRKRSGVLLYGPPGTGKTLLAKAVATECSLNFLSVKGPELINMYIGESEKNVRDIFEKARSARPCVIFFDELDSLAPARGASGDSGGVMDRVVSQMLAEIDGLSDSSQDLFIIGASNRPDLIDPALLRPGRFDKLLYVGVNADASYRERVLKALTRKFKLSEDVSLYSVAKKCPSTFTGADMYALCADAWFQAAKRKVSKSDSGDMPTEEDDPDSVVVEYVDFIKAMDQLSPSLSITELKKYEMLRDQFQGRSS.

Residues 384–391 (GIPGCGKR) and 698–705 (GPPGTGKT) each bind ATP.

The protein belongs to the AAA ATPase family. As to quaternary structure, interacts with PEX1; forming the PEX1-PEX6 AAA ATPase complex, which is composed of a heterohexamer formed by a trimer of PEX1-PEX6 dimers. Interacts with APME9.

The protein resides in the cytoplasm. It is found in the cytosol. The protein localises to the peroxisome membrane. It carries out the reaction ATP + H2O = ADP + phosphate + H(+). In terms of biological role, component of the PEX1-PEX6 AAA ATPase complex, a protein dislocase complex that mediates the ATP-dependent extraction of the PEX5 receptor from peroxisomal membranes, an essential step for PEX5 recycling. Specifically recognizes PEX5 monoubiquitinated at 'Cys-11', and pulls it out of the peroxisome lumen through the PEX2-PEX10-PEX12 retrotranslocation channel. Extraction by the PEX1-PEX6 AAA ATPase complex is accompanied by unfolding of the TPR repeats and release of bound cargo from PEX5. Required for jasmonate biosynthesis. Necessary for the developmental elimination of obsolete peroxisome matix proteins. The protein is Peroxisomal ATPase PEX6 of Arabidopsis thaliana (Mouse-ear cress).